Here is a 465-residue protein sequence, read N- to C-terminus: Argininosuccinate lyase (465 aa).

This sequence belongs to the lyase 1 family. Argininosuccinate lyase subfamily.

It localises to the cytoplasm. The enzyme catalyses 2-(N(omega)-L-arginino)succinate = fumarate + L-arginine. It participates in amino-acid biosynthesis; L-arginine biosynthesis; L-arginine from L-ornithine and carbamoyl phosphate: step 3/3. The chain is Argininosuccinate lyase from Rhodopseudomonas palustris (strain BisB5).